Reading from the N-terminus, the 480-residue chain is Protein disulfide-isomerase 5-4 (480 aa).

N-linked (GlcNAc...) asparagine glycosylation is found at asparagine 74 and asparagine 99. In terms of domain architecture, Thioredoxin spans phenylalanine 120–glutamate 263. Residues cysteine 170 and cysteine 173 each act as nucleophile in the active site. Cysteine 170 and cysteine 173 form a disulfide bridge. Residues asparagine 280, asparagine 326, and asparagine 376 are each glycosylated (N-linked (GlcNAc...) asparagine). Residues phenylalanine 439–isoleucine 459 form a helical membrane-spanning segment.

It belongs to the protein disulfide isomerase family. Widely expressed.

It localises to the membrane. In terms of biological role, acts as a protein-folding catalyst that interacts with nascent polypeptides to catalyze the formation, isomerization, and reduction or oxidation of disulfide bonds. The sequence is that of Protein disulfide-isomerase 5-4 (PDIL5-4) from Arabidopsis thaliana (Mouse-ear cress).